The sequence spans 636 residues: Ubiquitin-activating enzyme E1-like (636 aa).

ATP-binding positions include Gly-28 to Gly-33, Asp-52, Asn-60 to Arg-63, Lys-76, and Asp-121 to Arg-126. Zn(2+) contacts are provided by Cys-162 and Cys-165. Cys-177 functions as the Glycyl thioester intermediate in the catalytic mechanism. 2 residues coordinate Zn(2+): Cys-435 and Cys-438. Residues Asp-581–Asp-636 are disordered. Over residues Leu-586–Ile-595 the composition is skewed to acidic residues. The short motif at Lys-619–Lys-622 is the Nuclear localization signal element. Polar residues predominate over residues Glu-626–Asp-636.

It belongs to the ubiquitin-activating E1 family. Heterodimer of UBA2 and AOS1. The complex binds SMT3. Post-translationally, multiubiquitinated in vivo.

The protein resides in the nucleus. It functions in the pathway protein modification; protein sumoylation. Its function is as follows. The dimeric enzyme acts as a SMT3 E1 ligase. It mediates ATP-dependent activation of SMT3 and formation of a thioester with a conserved cysteine residue on AOS1. The protein is Ubiquitin-activating enzyme E1-like (UBA2) of Saccharomyces cerevisiae (strain ATCC 204508 / S288c) (Baker's yeast).